Consider the following 180-residue polypeptide: Ribulose bisphosphate carboxylase small subunit, chloroplastic 2 (180 aa).

Residues M1–Q56 constitute a chloroplast transit peptide.

Belongs to the RuBisCO small chain family. Heterohexadecamer of 8 large and 8 small subunits.

Its subcellular location is the plastid. The protein resides in the chloroplast. In terms of biological role, ruBisCO catalyzes two reactions: the carboxylation of D-ribulose 1,5-bisphosphate, the primary event in carbon dioxide fixation, as well as the oxidative fragmentation of the pentose substrate. Both reactions occur simultaneously and in competition at the same active site. Although the small subunit is not catalytic it is essential for maximal activity. This Petunia hybrida (Petunia) protein is Ribulose bisphosphate carboxylase small subunit, chloroplastic 2.